The primary structure comprises 619 residues: TOX high mobility group box family member 4 (619 aa).

Disordered regions lie at residues 155–227 (LSLG…QKPV), 304–335 (ELDPVPQSQTPSPPPVTTADPASPAPASTESP), and 436–458 (LPPPRLQPPPLQQMPQPPTQQQV). At threonine 176 the chain carries Phosphothreonine. Phosphoserine is present on residues serine 178 and serine 182. A compositionally biased stretch (basic and acidic residues) spans 183–193 (LHEDGVDDFRR). The span at 208-218 (KQKAPKKRKKK) shows a compositional bias: basic residues. The short motif at 213 to 218 (KKRKKK) is the Nuclear localization signal element. Residues 223–291 (PQKPVSAYAL…EYLKALAAYK (69 aa)) constitute a DNA-binding region (HMG box). Threonine 313 bears the Phosphothreonine mark. Phosphoserine is present on serine 315. The span at 320–335 (TTADPASPAPASTESP) shows a compositional bias: low complexity. The span at 436–453 (LPPPRLQPPPLQQMPQPP) shows a compositional bias: pro residues. The residue at position 479 (arginine 479) is an Asymmetric dimethylarginine. Phosphoserine occurs at positions 531, 548, 550, 558, 560, and 565.

In terms of assembly, component of the PNUTS-PP1 phosphatase complex, composed of PPP1R10/PNUTS, TOX4, WDR82 and PPP1CA or PPP1CB or PPP1CC. Interacts with PPP1R10/PNUTS. Interacts with FOXO1 and CREB1 (increased by cAMP); FOXO1 and CREB1 are required for full induction of TOX4-dependent activity and the interactions are inhibited by insulin.

The protein resides in the nucleus. The protein localises to the chromosome. Its activity is regulated as follows. In liver, recruited to target gene promoters following treatment with dexamethasone and cAMP. Binding is decreased in presence of insulin. Transcription factor that modulates cell fate reprogramming from the somatic state to the pluripotent and neuronal fate. In liver, controls the expression of hormone-regulated gluconeogenic genes such as G6PC1 and PCK1. This regulation is independent of the insulin receptor activation. Also acts as a regulatory component of protein phosphatase 1 (PP1) complexes. Component of the PNUTS-PP1 protein phosphatase complex, a PP1 complex that regulates RNA polymerase II transcription pause-release. PNUTS-PP1 also plays a role in the control of chromatin structure and cell cycle progression during the transition from mitosis into interphase. The polypeptide is TOX high mobility group box family member 4 (Tox4) (Rattus norvegicus (Rat)).